The sequence spans 321 residues: D-alanine--D-alanine ligase (321 aa).

In terms of domain architecture, ATP-grasp spans 121–315 (RSWFLTNNIN…FVNLIEEILK (195 aa)). 148–199 (IKRPYVIKPFTQGSSIGVEVIFEEDDFNFANYDFPYGDEVIIEKYIKGRELQ) provides a ligand contact to ATP. Residues glutamate 268, glutamate 282, and asparagine 284 each contribute to the Mg(2+) site.

It belongs to the D-alanine--D-alanine ligase family. Mg(2+) serves as cofactor. Requires Mn(2+) as cofactor.

It is found in the cytoplasm. It carries out the reaction 2 D-alanine + ATP = D-alanyl-D-alanine + ADP + phosphate + H(+). Its pathway is cell wall biogenesis; peptidoglycan biosynthesis. Its function is as follows. Cell wall formation. The polypeptide is D-alanine--D-alanine ligase (Rickettsia bellii (strain OSU 85-389)).